Reading from the N-terminus, the 285-residue chain is 4-diphosphocytidyl-2-C-methyl-D-erythritol kinase (285 aa).

K10 is a catalytic residue. ATP is bound at residue 92 to 102 (PFGAGLGGGSS). D134 is an active-site residue.

It belongs to the GHMP kinase family. IspE subfamily.

It carries out the reaction 4-CDP-2-C-methyl-D-erythritol + ATP = 4-CDP-2-C-methyl-D-erythritol 2-phosphate + ADP + H(+). Its pathway is isoprenoid biosynthesis; isopentenyl diphosphate biosynthesis via DXP pathway; isopentenyl diphosphate from 1-deoxy-D-xylulose 5-phosphate: step 3/6. In terms of biological role, catalyzes the phosphorylation of the position 2 hydroxy group of 4-diphosphocytidyl-2C-methyl-D-erythritol. The polypeptide is 4-diphosphocytidyl-2-C-methyl-D-erythritol kinase (Chloroherpeton thalassium (strain ATCC 35110 / GB-78)).